Here is a 254-residue protein sequence, read N- to C-terminus: 5-oxoprolinase subunit A (254 aa).

This sequence belongs to the LamB/PxpA family. Forms a complex composed of PxpA, PxpB and PxpC.

The enzyme catalyses 5-oxo-L-proline + ATP + 2 H2O = L-glutamate + ADP + phosphate + H(+). Functionally, catalyzes the cleavage of 5-oxoproline to form L-glutamate coupled to the hydrolysis of ATP to ADP and inorganic phosphate. This Burkholderia thailandensis (strain ATCC 700388 / DSM 13276 / CCUG 48851 / CIP 106301 / E264) protein is 5-oxoprolinase subunit A.